The sequence spans 173 residues: N-alpha-acetyltransferase 20 (173 aa).

The N-acetyltransferase domain occupies 2–151; the sequence is TTIRRFVCDD…DALDMRKALP (150 aa).

This sequence belongs to the acetyltransferase family. ARD1 subfamily.

Its function is as follows. Seems to be involved in N-acetylation. The chain is N-alpha-acetyltransferase 20 (nat5) from Dictyostelium discoideum (Social amoeba).